The following is an 887-amino-acid chain: Alanine--tRNA ligase (887 aa).

His-564, His-568, Cys-675, and His-679 together coordinate Zn(2+). Residues Gly-851–Pro-866 are compositionally biased toward gly residues. A disordered region spans residues Gly-851 to Ala-871.

The protein belongs to the class-II aminoacyl-tRNA synthetase family. It depends on Zn(2+) as a cofactor.

The protein resides in the cytoplasm. The enzyme catalyses tRNA(Ala) + L-alanine + ATP = L-alanyl-tRNA(Ala) + AMP + diphosphate. Its function is as follows. Catalyzes the attachment of alanine to tRNA(Ala) in a two-step reaction: alanine is first activated by ATP to form Ala-AMP and then transferred to the acceptor end of tRNA(Ala). Also edits incorrectly charged Ser-tRNA(Ala) and Gly-tRNA(Ala) via its editing domain. This is Alanine--tRNA ligase from Rhizorhabdus wittichii (strain DSM 6014 / CCUG 31198 / JCM 15750 / NBRC 105917 / EY 4224 / RW1) (Sphingomonas wittichii).